Consider the following 381-residue polypeptide: Flap endonuclease 1 (381 aa).

Positions 1–105 (MGIKNLATLI…YELDKRKVRR (105 aa)) are N-domain. Asp-34 contributes to the Mg(2+) binding site. Arg-47 and Arg-71 together coordinate DNA. Mg(2+) is bound by residues Asp-87, Glu-156, Glu-158, Asp-177, and Asp-179. Residues 120 to 251 (EIIKHERRLV…VNALKLIKEH (132 aa)) are I-domain. Glu-156 is a DNA binding site. 2 residues coordinate DNA: Gly-229 and Asp-231. Mg(2+) is bound at residue Asp-231. The interaction with PCNA stretch occupies residues 339 to 347 (VQKRLDSFF). Residues 360-381 (AAKKAKDAKKKAAAKGKIAKRR) are disordered. Over residues 365 to 381 (KDAKKKAAAKGKIAKRR) the composition is skewed to basic residues.

It belongs to the XPG/RAD2 endonuclease family. FEN1 subfamily. As to quaternary structure, interacts with PCNA. Three molecules of FEN1 bind to one PCNA trimer with each molecule binding to one PCNA monomer. PCNA stimulates the nuclease activity without altering cleavage specificity. Mg(2+) is required as a cofactor. Phosphorylated. Phosphorylation upon DNA damage induces relocalization to the nuclear plasma.

It localises to the nucleus. The protein localises to the nucleolus. Its subcellular location is the nucleoplasm. It is found in the mitochondrion. Structure-specific nuclease with 5'-flap endonuclease and 5'-3' exonuclease activities involved in DNA replication and repair. During DNA replication, cleaves the 5'-overhanging flap structure that is generated by displacement synthesis when DNA polymerase encounters the 5'-end of a downstream Okazaki fragment. It enters the flap from the 5'-end and then tracks to cleave the flap base, leaving a nick for ligation. Also involved in the long patch base excision repair (LP-BER) pathway, by cleaving within the apurinic/apyrimidinic (AP) site-terminated flap. Acts as a genome stabilization factor that prevents flaps from equilibrating into structures that lead to duplications and deletions. Also possesses 5'-3' exonuclease activity on nicked or gapped double-stranded DNA, and exhibits RNase H activity. Also involved in replication and repair of rDNA and in repairing mitochondrial DNA. In Kluyveromyces lactis (strain ATCC 8585 / CBS 2359 / DSM 70799 / NBRC 1267 / NRRL Y-1140 / WM37) (Yeast), this protein is Flap endonuclease 1.